We begin with the raw amino-acid sequence, 91 residues long: UPF0250 protein NMA1380 (91 aa).

Belongs to the UPF0250 family.

The chain is UPF0250 protein NMA1380 from Neisseria meningitidis serogroup A / serotype 4A (strain DSM 15465 / Z2491).